Consider the following 238-residue polypeptide: uncharacterized protein (238 aa).

The first 20 residues, Met-1–Ala-20, serve as a signal peptide directing secretion.

The protein to E.coli GltF.

This is an uncharacterized protein from Escherichia coli (strain K12).